Consider the following 289-residue polypeptide: GTPase Era (289 aa).

The 166-residue stretch at 2 to 167 (KSGFVSIIGR…LDEICKLLPE (166 aa)) folds into the Era-type G domain. The interval 10-17 (GRTNAGKS) is G1. GTP is bound at residue 10–17 (GRTNAGKS). The interval 36-40 (NATRR) is G2. Residues 57-60 (DTPG) are G3. Residues 57–61 (DTPGL) and 116–119 (TKVD) contribute to the GTP site. The interval 116–119 (TKVD) is G4. The interval 146–148 (FST) is G5. Residues 194–274 (IYENLSDEIP…FLKLDVVVKK (81 aa)) form the KH type-2 domain.

The protein belongs to the TRAFAC class TrmE-Era-EngA-EngB-Septin-like GTPase superfamily. Era GTPase family. In terms of assembly, monomer.

Its subcellular location is the cytoplasm. The protein localises to the cell inner membrane. An essential GTPase that binds both GDP and GTP, with rapid nucleotide exchange. Plays a role in 16S rRNA processing and 30S ribosomal subunit biogenesis and possibly also in cell cycle regulation and energy metabolism. The sequence is that of GTPase Era from Campylobacter concisus (strain 13826).